Here is a 113-residue protein sequence, read N- to C-terminus: Large ribosomal subunit protein eL30 (113 aa).

It belongs to the eukaryotic ribosomal protein eL30 family.

The chain is Large ribosomal subunit protein eL30 (RpL30) from Spodoptera frugiperda (Fall armyworm).